Here is a 546-residue protein sequence, read N- to C-terminus: Probable malate:quinone oxidoreductase (546 aa).

This sequence belongs to the MQO family. Requires FAD as cofactor.

It carries out the reaction (S)-malate + a quinone = a quinol + oxaloacetate. It functions in the pathway carbohydrate metabolism; tricarboxylic acid cycle; oxaloacetate from (S)-malate (quinone route): step 1/1. The protein is Probable malate:quinone oxidoreductase of Acinetobacter baumannii (strain AB0057).